We begin with the raw amino-acid sequence, 89 residues long: uncharacterized protein (89 aa).

The next 3 helical transmembrane spans lie at 9 to 29, 35 to 55, and 65 to 85; these read ICNF…LHSI, ISLS…YIYL, and ILFA…FGTS.

The protein resides in the membrane. This is an uncharacterized protein from Schizosaccharomyces pombe (strain 972 / ATCC 24843) (Fission yeast).